The primary structure comprises 459 residues: Serine carboxypeptidase-like 27 (459 aa).

Residues 1–20 form the signal peptide; it reads MDYSFLLIILLLTISTSCCA. Intrachain disulfides connect Cys91–Cys344, Cys252–Cys264, and Cys288–Cys312. The N-linked (GlcNAc...) asparagine glycan is linked to Asn142. The active site involves Ser184. Asn289 and Asn333 each carry an N-linked (GlcNAc...) asparagine glycan. Catalysis depends on residues Asp381 and His433.

Belongs to the peptidase S10 family. Ubiquitous.

The protein localises to the secreted. Functionally, probable carboxypeptidase. This chain is Serine carboxypeptidase-like 27 (SCPL27), found in Arabidopsis thaliana (Mouse-ear cress).